The primary structure comprises 166 residues: ATP synthase subunit b (166 aa).

The chain crosses the membrane as a helical span at residues 27–47 (FFVVLLIFLIVLGVIAKWVVP). A disordered region spans residues 124–143 (SADQQLSQQGSAAQSELQSS).

It belongs to the ATPase B chain family. As to quaternary structure, F-type ATPases have 2 components, F(1) - the catalytic core - and F(0) - the membrane proton channel. F(1) has five subunits: alpha(3), beta(3), gamma(1), delta(1), epsilon(1). F(0) has three main subunits: a(1), b(2) and c(10-14). The alpha and beta chains form an alternating ring which encloses part of the gamma chain. F(1) is attached to F(0) by a central stalk formed by the gamma and epsilon chains, while a peripheral stalk is formed by the delta and b chains.

It is found in the cell membrane. F(1)F(0) ATP synthase produces ATP from ADP in the presence of a proton or sodium gradient. F-type ATPases consist of two structural domains, F(1) containing the extramembraneous catalytic core and F(0) containing the membrane proton channel, linked together by a central stalk and a peripheral stalk. During catalysis, ATP synthesis in the catalytic domain of F(1) is coupled via a rotary mechanism of the central stalk subunits to proton translocation. Its function is as follows. Component of the F(0) channel, it forms part of the peripheral stalk, linking F(1) to F(0). The polypeptide is ATP synthase subunit b (Mycolicibacterium vanbaalenii (strain DSM 7251 / JCM 13017 / BCRC 16820 / KCTC 9966 / NRRL B-24157 / PYR-1) (Mycobacterium vanbaalenii)).